The chain runs to 182 residues: Transcription termination/antitermination protein NusG (182 aa).

Belongs to the NusG family.

Functionally, participates in transcription elongation, termination and antitermination. The protein is Transcription termination/antitermination protein NusG of Chlamydia trachomatis serovar D (strain ATCC VR-885 / DSM 19411 / UW-3/Cx).